We begin with the raw amino-acid sequence, 197 residues long: Probable nicotinate-nucleotide adenylyltransferase (197 aa).

Belongs to the NadD family.

The enzyme catalyses nicotinate beta-D-ribonucleotide + ATP + H(+) = deamido-NAD(+) + diphosphate. It participates in cofactor biosynthesis; NAD(+) biosynthesis; deamido-NAD(+) from nicotinate D-ribonucleotide: step 1/1. Its function is as follows. Catalyzes the reversible adenylation of nicotinate mononucleotide (NaMN) to nicotinic acid adenine dinucleotide (NaAD). The protein is Probable nicotinate-nucleotide adenylyltransferase of Bordetella parapertussis (strain 12822 / ATCC BAA-587 / NCTC 13253).